Here is a 157-residue protein sequence, read N- to C-terminus: Ribosome-binding factor A (157 aa).

Positions 127–157 (QQQFGSEEASVEDEVLGDDVADDADETEGKD) are disordered. A compositionally biased stretch (acidic residues) spans 135–157 (ASVEDEVLGDDVADDADETEGKD).

It belongs to the RbfA family. In terms of assembly, monomer. Binds 30S ribosomal subunits, but not 50S ribosomal subunits or 70S ribosomes.

It is found in the cytoplasm. Its function is as follows. One of several proteins that assist in the late maturation steps of the functional core of the 30S ribosomal subunit. Associates with free 30S ribosomal subunits (but not with 30S subunits that are part of 70S ribosomes or polysomes). Required for efficient processing of 16S rRNA. May interact with the 5'-terminal helix region of 16S rRNA. In Shewanella baltica (strain OS195), this protein is Ribosome-binding factor A.